We begin with the raw amino-acid sequence, 66 residues long: Large ribosomal subunit protein bL35 (66 aa).

This sequence belongs to the bacterial ribosomal protein bL35 family.

The sequence is that of Large ribosomal subunit protein bL35 from Hyphomonas neptunium (strain ATCC 15444).